A 423-amino-acid polypeptide reads, in one-letter code: Phosphoribosylamine--glycine ligase (423 aa).

One can recognise an ATP-grasp domain in the interval 107-312; it reads KAFADRYGLP…LVPYLVACAN (206 aa). Position 133 to 193 (133 to 193) interacts with ATP; that stretch reads LELFEPPYVI…EEFLEGEIGS (61 aa). Residues glutamate 270, glutamate 282, and asparagine 284 each contribute to the Mg(2+) site. Mn(2+) contacts are provided by glutamate 270, glutamate 282, and asparagine 284.

It belongs to the GARS family. The cofactor is Mg(2+). Requires Mn(2+) as cofactor.

The enzyme catalyses 5-phospho-beta-D-ribosylamine + glycine + ATP = N(1)-(5-phospho-beta-D-ribosyl)glycinamide + ADP + phosphate + H(+). The protein operates within purine metabolism; IMP biosynthesis via de novo pathway; N(1)-(5-phospho-D-ribosyl)glycinamide from 5-phospho-alpha-D-ribose 1-diphosphate: step 2/2. This is Phosphoribosylamine--glycine ligase from Phenylobacterium zucineum (strain HLK1).